A 322-amino-acid polypeptide reads, in one-letter code: HPr kinase/phosphorylase (322 aa).

Catalysis depends on residues His-142 and Lys-163. Gly-157 to Ser-164 lines the ATP pocket. Mg(2+) is bound at residue Ser-164. The Proton acceptor; for phosphorylation activity. Proton donor; for dephosphorylation activity role is filled by Asp-181. Residues Met-205–Asp-214 form an important for the catalytic mechanism of both phosphorylation and dephosphorylation region. Glu-206 contacts Mg(2+). Residue Arg-247 is part of the active site. An important for the catalytic mechanism of dephosphorylation region spans residues Pro-268 to Arg-273.

It belongs to the HPrK/P family. As to quaternary structure, homohexamer. Mg(2+) serves as cofactor.

The enzyme catalyses [HPr protein]-L-serine + ATP = [HPr protein]-O-phospho-L-serine + ADP + H(+). It catalyses the reaction [HPr protein]-O-phospho-L-serine + phosphate + H(+) = [HPr protein]-L-serine + diphosphate. Catalyzes the ATP- as well as the pyrophosphate-dependent phosphorylation of a specific serine residue in HPr, a phosphocarrier protein of the phosphoenolpyruvate-dependent sugar phosphotransferase system (PTS). HprK/P also catalyzes the pyrophosphate-producing, inorganic phosphate-dependent dephosphorylation (phosphorolysis) of seryl-phosphorylated HPr (P-Ser-HPr). The two antagonistic activities of HprK/P are regulated by several intracellular metabolites, which change their concentration in response to the absence or presence of rapidly metabolisable carbon sources (glucose, fructose, etc.) in the growth medium. Therefore, by controlling the phosphorylation state of HPr, HPrK/P is a sensor enzyme that plays a major role in the regulation of carbon metabolism and sugar transport: it mediates carbon catabolite repression (CCR), and regulates PTS-catalyzed carbohydrate uptake and inducer exclusion. The sequence is that of HPr kinase/phosphorylase from Lactobacillus acidophilus (strain ATCC 700396 / NCK56 / N2 / NCFM).